Reading from the N-terminus, the 420-residue chain is Sodium-dependent phosphate transport protein 4 (420 aa).

A disordered region spans residues 1-21; the sequence is MATKTELSPTARESKNAQDMQ. Asn-49, Asn-60, Asn-68, and Asn-77 each carry an N-linked (GlcNAc...) asparagine glycan. Transmembrane regions (helical) follow at residues 126–146, 154–174, 218–238, 256–276, 292–314, 319–341, 357–377, and 385–405; these read SIALSGMLLGCFTAILIGGFI, FVFYIFGGVGCVCCLLWFVVI, IWSICLGCFSHQWLVSTMVVY, LLSALPFIVAWVIGMVGGYLA, IATILGSLPSSALIVSLPYLNSG, TALLTLSCGLSTLCQSGIYINVL, GFSSIAPVIVPTVSGFLLSQD, and VFFLLFAVNLLGLLFYLIFGE.

This sequence belongs to the major facilitator superfamily. Sodium/anion cotransporter family. In terms of tissue distribution, expressed in the liver and kidney. It is detected in proximal tubules in renal cortex as well as some tubules and glomeruli, with highest expression at the apical side of proximal tubules (at protein level).

It is found in the endoplasmic reticulum membrane. Its subcellular location is the cell membrane. It carries out the reaction urate(in) + Na(+)(out) = urate(out) + Na(+)(in). Functionally, transports organic anions in a voltage-driven, multispecific, manner, on the apical side of renal proximal tubule. In particular, participates in the secretion of urate from the cell into the lumen. Urate is the end product of purine metabolism. May have roles in the metabolism and secretion of estrone sulfate, estradiol-17-beta-glucuronide, ochratoxin A, as wells as drugs such as bumetanide. The polypeptide is Sodium-dependent phosphate transport protein 4 (SLC17A3) (Homo sapiens (Human)).